We begin with the raw amino-acid sequence, 479 residues long: Sulfate adenylyltransferase subunit 1 (479 aa).

In terms of domain architecture, tr-type G spans 25 to 239; that stretch reads KSLLRFLTCG…EVLETVDIQR (215 aa). The tract at residues 34-41 is G1; it reads GSVDDGKS. Residue 34-41 coordinates GTP; it reads GSVDDGKS. Positions 92-96 are G2; it reads GITID. Residues 113-116 form a G3 region; the sequence is DTPG. Residues 113–117 and 168–171 each bind GTP; these read DTPGH and NKMD. Residues 168-171 are G4; the sequence is NKMD. The tract at residues 206 to 208 is G5; it reads SAL.

Belongs to the TRAFAC class translation factor GTPase superfamily. Classic translation factor GTPase family. CysN/NodQ subfamily. Heterodimer composed of CysD, the smaller subunit, and CysN.

The enzyme catalyses sulfate + ATP + H(+) = adenosine 5'-phosphosulfate + diphosphate. It participates in sulfur metabolism; hydrogen sulfide biosynthesis; sulfite from sulfate: step 1/3. Its function is as follows. With CysD forms the ATP sulfurylase (ATPS) that catalyzes the adenylation of sulfate producing adenosine 5'-phosphosulfate (APS) and diphosphate, the first enzymatic step in sulfur assimilation pathway. APS synthesis involves the formation of a high-energy phosphoric-sulfuric acid anhydride bond driven by GTP hydrolysis by CysN coupled to ATP hydrolysis by CysD. The chain is Sulfate adenylyltransferase subunit 1 from Salmonella typhimurium (strain LT2 / SGSC1412 / ATCC 700720).